Consider the following 46-residue polypeptide: Cuticle protein 4.9 (46 aa).

In terms of biological role, component of the cuticle of migratory locust which contains more than 100 different structural proteins. This Locusta migratoria (Migratory locust) protein is Cuticle protein 4.9.